The primary structure comprises 185 residues: TATA-box-binding protein 3 (185 aa).

A run of 2 repeats spans residues 7–84 and 100–178.

This sequence belongs to the TBP family.

In terms of biological role, general factor that plays a role in the activation of archaeal genes transcribed by RNA polymerase. Binds specifically to the TATA box promoter element which lies close to the position of transcription initiation. The chain is TATA-box-binding protein 3 from Methanosarcina acetivorans (strain ATCC 35395 / DSM 2834 / JCM 12185 / C2A).